The primary structure comprises 800 residues: Mitogen-activated protein kinase kinase kinase 20 (800 aa).

Position 2 is an N-acetylserine (serine 2). Phosphoserine; by autocatalysis is present on residues serine 2, serine 3, and serine 7. A Protein kinase domain is found at 16–277; the sequence is LQFFENCGGG…SLPDKCNSFL (262 aa). ATP-binding positions include 22-30 and lysine 45; that span reads CGGGSFGSV. Aspartate 133 (proton acceptor) is an active-site residue. Phosphothreonine; by autocatalysis is present on threonine 161. Serine 165 bears the Phosphoserine; by autocatalysis mark. Residue serine 275 is modified to Phosphoserine. The interval 287 to 308 is leucine-zipper; sequence IEATLERLKKLERDLSFKEQEL. Serine 302 is modified (phosphoserine; by autocatalysis). 5 positions are modified to phosphoserine: tryptophan 339, glutamate 429, lysine 434, aspartate 454, and serine 567. The 72-residue stretch at 339-410 folds into the SAM domain; it reads WTEDDVYCWV…KSAIEKLTHD (72 aa). A Phosphothreonine; by autocatalysis modification is found at threonine 586. Serine 587 carries the phosphoserine; by autocatalysis modification. Phosphoserine is present on residues serine 593 and serine 599. A Phosphothreonine modification is found at threonine 628. Phosphoserine occurs at positions 633, 637, and 648. A phosphoserine; by autocatalysis mark is found at serine 649 and serine 660. Residues 652 to 666 show a composition bias toward polar residues; sequence LNSRDSGFSSGNTDT. The disordered stretch occupies residues 652–800; it reads LNSRDSGFSS…RGDHRGWRNF (149 aa). Threonine 664 is modified (phosphothreonine; by autocatalysis). Residues 667 to 678 show a composition bias toward basic and acidic residues; that stretch reads SSERGRYSDRSR. A sensing domain (S) region spans residues 670–713; the sequence is RGRYSDRSRNKYGRGSISLNSSPRGRYSGKSQHSTPSRGRYPGK. At serine 685 the chain carries Phosphoserine. 2 stretches are compositionally biased toward polar residues: residues 686–706 and 717–726; these read ISLNSSPRGRYSGKSQHSTPS and VSQSALNPHQ. Residues serine 718 and serine 720 each carry the phosphoserine; by autocatalysis modification. Phosphoserine is present on residues serine 727 and serine 733. The segment covering 728 to 738 has biased composition (basic and acidic residues); it reads PDFKRSPRDLH. Threonine 742 is modified (phosphothreonine; by autocatalysis). 2 stretches are compositionally biased toward basic and acidic residues: residues 750-763 and 785-800; these read PETDSRASEEDSKV and TNKERARGDHRGWRNF. The segment at 774–800 is C-terminal domain (CTD); that stretch reads RKKPHRPSPAKTNKERARGDHRGWRNF.

This sequence belongs to the protein kinase superfamily. STE Ser/Thr protein kinase family. MAP kinase kinase kinase subfamily. In terms of assembly, homodimer. Interacts with ZNF33A. Component of a signaling complex containing at least AKAP13, PKN1, MAPK14, MAP3K20 and MAP2K3. Within this complex, AKAP13 interacts directly with PKN1, which in turn recruits MAPK14, MAP2K3 and MAP3K20. Interacts with EIF2AK4/GCN2; promoting EIF2AK4/GCN2 kinase activity. Interacts with isoform ZAKbeta. As to quaternary structure, interacts with isoform ZAKalpha. It depends on Mg(2+) as a cofactor. Activated by phosphorylation by PKN1, followed by autophosphorylation on Thr-161 and Ser-165. Autophosphorylation in response to ribotoxic stress promotes dissociation from colliding ribosomes and activation. As to expression, ubiquitously expressed. Isoform ZAKbeta is the predominant form in all tissues examined, except for liver, in which isoform ZAKalpha is more highly expressed.

The protein localises to the cytoplasm. The protein resides in the nucleus. It carries out the reaction L-seryl-[protein] + ATP = O-phospho-L-seryl-[protein] + ADP + H(+). It catalyses the reaction L-threonyl-[protein] + ATP = O-phospho-L-threonyl-[protein] + ADP + H(+). Its activity is regulated as follows. Activated in response to stress, such as ribosomal stress, osmotic shock and ionizing radiation. Activated by phosphorylation by PKN1, followed by autophosphorylation on Thr-161 and Ser-165. Inhibited by nilotinib, sorafenib, dabrafenib, rebastinib and vemurafenib. Selectively inhibited by N-(3)-((1H-Pyrazolo[3,4-b]pyridin-5-yl)ethynyl)benzenesulfonamide compound 3h. Selectively inhibited by 1,2,3-triazole benzenesulfonamides. Its function is as follows. Stress-activated component of a protein kinase signal transduction cascade that promotes programmed cell death in response to various stress, such as ribosomal stress, osmotic shock and ionizing radiation. Acts by catalyzing phosphorylation of MAP kinase kinases, leading to activation of the JNK (MAPK8/JNK1, MAPK9/JNK2 and/or MAPK10/JNK3) and MAP kinase p38 (MAPK11, MAPK12, MAPK13 and/or MAPK14) pathways. Activates JNK through phosphorylation of MAP2K4/MKK4 and MAP2K7/MKK7, and MAP kinase p38 gamma (MAPK12) via phosphorylation of MAP2K3/MKK3 and MAP2K6/MKK6. Involved in stress associated with adrenergic stimulation: contributes to cardiac decompensation during periods of acute cardiac stress. May be involved in regulation of S and G2 cell cycle checkpoint by mediating phosphorylation of CHEK2. Key component of the stress-activated protein kinase signaling cascade in response to ribotoxic stress or UV-B irradiation. Acts as the proximal sensor of ribosome collisions during the ribotoxic stress response (RSR): directly binds to the ribosome by inserting its flexible C-terminus into the ribosomal intersubunit space, thereby acting as a sentinel for colliding ribosomes. Upon ribosome collisions, activates either the stress-activated protein kinase signal transduction cascade or the integrated stress response (ISR), leading to programmed cell death or cell survival, respectively. Dangerous levels of ribosome collisions trigger the autophosphorylation and activation of MAP3K20, which dissociates from colliding ribosomes and phosphorylates MAP kinase kinases, leading to activation of the JNK and MAP kinase p38 pathways that promote programmed cell death. Less dangerous levels of ribosome collisions trigger the integrated stress response (ISR): MAP3K20 activates EIF2AK4/GCN2 independently of its protein-kinase activity, promoting EIF2AK4/GCN2-mediated phosphorylation of EIF2S1/eIF-2-alpha. Also part of the stress-activated protein kinase signaling cascade triggering the NLRP1 inflammasome in response to UV-B irradiation: ribosome collisions activate MAP3K20, which directly phosphorylates NLRP1, leading to activation of the NLRP1 inflammasome and subsequent pyroptosis. NLRP1 is also phosphorylated by MAP kinase p38 downstream of MAP3K20. Also acts as a histone kinase by phosphorylating histone H3 at 'Ser-28' (H3S28ph). In terms of biological role, isoform that lacks the C-terminal region that mediates ribosome-binding: does not act as a sensor of ribosome collisions in response to ribotoxic stress. May act as an antagonist of isoform ZAKalpha: interacts with isoform ZAKalpha, leading to decrease the expression of isoform ZAKalpha. This chain is Mitogen-activated protein kinase kinase kinase 20, found in Homo sapiens (Human).